Reading from the N-terminus, the 436-residue chain is Anaerobic glycerol-3-phosphate dehydrogenase subunit B (436 aa).

Belongs to the anaerobic G-3-P dehydrogenase subunit B family. Composed of a catalytic GlpA/B dimer and of membrane bound GlpC. It depends on FMN as a cofactor.

The enzyme catalyses a quinone + sn-glycerol 3-phosphate = dihydroxyacetone phosphate + a quinol. The protein operates within polyol metabolism; glycerol degradation via glycerol kinase pathway; glycerone phosphate from sn-glycerol 3-phosphate (anaerobic route): step 1/1. In terms of biological role, conversion of glycerol 3-phosphate to dihydroxyacetone. Uses fumarate or nitrate as electron acceptor. This chain is Anaerobic glycerol-3-phosphate dehydrogenase subunit B, found in Vibrio cholerae serotype O1 (strain ATCC 39541 / Classical Ogawa 395 / O395).